A 431-amino-acid polypeptide reads, in one-letter code: Serine--tRNA ligase (431 aa).

Position 235-237 (235-237 (TAE)) interacts with L-serine. ATP-binding positions include 266-268 (RRE) and Val-282. L-serine is bound at residue Glu-289. 353–356 (EASS) is a binding site for ATP. Ser-389 is a binding site for L-serine.

Belongs to the class-II aminoacyl-tRNA synthetase family. Type-1 seryl-tRNA synthetase subfamily. As to quaternary structure, homodimer. The tRNA molecule binds across the dimer.

The protein resides in the cytoplasm. It carries out the reaction tRNA(Ser) + L-serine + ATP = L-seryl-tRNA(Ser) + AMP + diphosphate + H(+). It catalyses the reaction tRNA(Sec) + L-serine + ATP = L-seryl-tRNA(Sec) + AMP + diphosphate + H(+). Its pathway is aminoacyl-tRNA biosynthesis; selenocysteinyl-tRNA(Sec) biosynthesis; L-seryl-tRNA(Sec) from L-serine and tRNA(Sec): step 1/1. In terms of biological role, catalyzes the attachment of serine to tRNA(Ser). Is also able to aminoacylate tRNA(Sec) with serine, to form the misacylated tRNA L-seryl-tRNA(Sec), which will be further converted into selenocysteinyl-tRNA(Sec). This Pelodictyon phaeoclathratiforme (strain DSM 5477 / BU-1) protein is Serine--tRNA ligase.